The primary structure comprises 738 residues: NAD(P)H-quinone oxidoreductase subunit 5, chloroplastic (738 aa).

16 consecutive transmembrane segments (helical) span residues 9 to 29, 40 to 60, 89 to 109, 125 to 145, 147 to 167, 185 to 205, 230 to 250, 258 to 278, 280 to 300, 327 to 347, 354 to 374, 396 to 416, 425 to 445, 546 to 566, 603 to 623, and 718 to 738; these read WIIP…LLLF, WAFP…NLSI, IDPL…MVLI, FASM…SNLI, IYIF…FWFT, GDFG…SFEF, AALL…HVWL, TPIS…FLVA, LLPL…IGII, LGYM…FHLI, ALLF…VGYS, ISFL…CFWS, WLYS…TAFY, LFPL…GIPF, FSVS…KPIY, and YLFF…FPVF.

Belongs to the complex I subunit 5 family. In terms of assembly, NDH is composed of at least 16 different subunits, 5 of which are encoded in the nucleus.

The protein localises to the plastid. It is found in the chloroplast thylakoid membrane. It catalyses the reaction a plastoquinone + NADH + (n+1) H(+)(in) = a plastoquinol + NAD(+) + n H(+)(out). It carries out the reaction a plastoquinone + NADPH + (n+1) H(+)(in) = a plastoquinol + NADP(+) + n H(+)(out). Its function is as follows. NDH shuttles electrons from NAD(P)H:plastoquinone, via FMN and iron-sulfur (Fe-S) centers, to quinones in the photosynthetic chain and possibly in a chloroplast respiratory chain. The immediate electron acceptor for the enzyme in this species is believed to be plastoquinone. Couples the redox reaction to proton translocation, and thus conserves the redox energy in a proton gradient. In Ligustrum vulgare (Common privet), this protein is NAD(P)H-quinone oxidoreductase subunit 5, chloroplastic (ndhF).